The chain runs to 203 residues: Large ribosomal subunit protein uL13 (203 aa).

Alanine 2 bears the N-acetylalanine mark. The residue at position 59 (arginine 59) is a Citrulline. Serine 77 bears the Phosphoserine mark. Arginine 140 carries the citrulline modification. N6-acetyllysine is present on lysine 191.

It belongs to the universal ribosomal protein uL13 family. As to quaternary structure, component of the 60S ribosome. Component of the GAIT complex. Interacts with EIF4G1. Post-translationally, phosphorylation at Ser-77 upon interferon-gamma treatment in macrophages involves a DAPK1-DAPK3 kinase cascade and is causing release from the ribosome, association with the GAIT complex and subsequent involvement in transcript-selective translation inhibition. Citrullinated by PADI4.

Its subcellular location is the cytoplasm. Functionally, associated with ribosomes but is not required for canonical ribosome function and has extra-ribosomal functions. Component of the GAIT (gamma interferon-activated inhibitor of translation) complex which mediates interferon-gamma-induced transcript-selective translation inhibition in inflammation processes. Upon interferon-gamma activation and subsequent phosphorylation dissociates from the ribosome and assembles into the GAIT complex which binds to stem loop-containing GAIT elements in the 3'-UTR of diverse inflammatory mRNAs (such as ceruplasmin) and suppresses their translation. In the GAIT complex interacts with m7G cap-bound eIF4G at or near the eIF3-binding site and blocks the recruitment of the 43S ribosomal complex. Involved in methylation of rRNA. This is Large ribosomal subunit protein uL13 (RPL13A) from Bos taurus (Bovine).